Here is a 72-residue protein sequence, read N- to C-terminus: MLVLSRKKDQSLMIGNDIELTIIDIQGDQVKIGLKAPKNVSIYRKELYLEIQEENKKAATADVVELDSIFKK.

Belongs to the CsrA/RsmA family. In terms of assembly, homodimer; the beta-strands of each monomer intercalate to form a hydrophobic core, while the alpha-helices form wings that extend away from the core.

It localises to the cytoplasm. Its function is as follows. A translational regulator that binds mRNA to regulate translation initiation and/or mRNA stability. Usually binds in the 5'-UTR at or near the Shine-Dalgarno sequence preventing ribosome-binding, thus repressing translation. Its main target seems to be the major flagellin gene, while its function is anatagonized by FliW. The protein is Translational regulator CsrA of Ruminiclostridium cellulolyticum (strain ATCC 35319 / DSM 5812 / JCM 6584 / H10) (Clostridium cellulolyticum).